We begin with the raw amino-acid sequence, 147 residues long: Hemoglobin subunit beta (147 aa).

Valine 2 is modified (N-acetylvaline). In terms of domain architecture, Globin spans 3–147 (HLTPEEKSAV…VANALAHKYH (145 aa)). The residue at position 13 (threonine 13) is a Phosphothreonine. Serine 45 bears the Phosphoserine mark. Lysine 60 bears the N6-acetyllysine mark. Histidine 64 contacts heme b. N6-acetyllysine is present on lysine 83. Histidine 93 is a binding site for heme b. Cysteine 94 is modified (S-nitrosocysteine). Position 145 is an N6-acetyllysine (lysine 145).

Belongs to the globin family. Heterotetramer of two alpha chains and two beta chains. In terms of tissue distribution, red blood cells.

In terms of biological role, involved in oxygen transport from the lung to the various peripheral tissues. The polypeptide is Hemoglobin subunit beta (HBB) (Gorilla gorilla gorilla (Western lowland gorilla)).